Reading from the N-terminus, the 354-residue chain is MTELKNDRYLRALLRQPVDVTPVWMMRQAGRYLPEYKATRAQAGDFMSLCKNAELACEVTLQPLRRYPLDAAILFSDILTIPDAMGLGLYFEAGEGPRFTSPVKSKADVDKLPIPDPEQELGYVMNAVRTIRRELKGEVPLIGFSGSPWTLATYMVEGGSSKAFTVIKKMMYAEPQALHALLDKLAKSVTLYLNAQIKAGAQSVMIFDTWGGVLTGRDYQQFSLYYMHKIVDGLLRENEGRRVPVTLFTKGGGQWLEAMAETGCDALGLDWTTDIADARRRVGNKVALQGNMDPSMLYASAPRIEEEVATILAGFGQGEGHVFNLGHGIHQDVDPEHAGVFVEAVHRLSAPYHQ.

Substrate-binding positions include 27–31 (RQAGR), D77, Y154, T209, and H327.

It belongs to the uroporphyrinogen decarboxylase family. Homodimer.

Its subcellular location is the cytoplasm. It carries out the reaction uroporphyrinogen III + 4 H(+) = coproporphyrinogen III + 4 CO2. It functions in the pathway porphyrin-containing compound metabolism; protoporphyrin-IX biosynthesis; coproporphyrinogen-III from 5-aminolevulinate: step 4/4. Its function is as follows. Catalyzes the decarboxylation of four acetate groups of uroporphyrinogen-III to yield coproporphyrinogen-III. The protein is Uroporphyrinogen decarboxylase of Klebsiella pneumoniae subsp. pneumoniae (strain ATCC 700721 / MGH 78578).